The sequence spans 484 residues: Glutamyl-tRNA(Gln) amidotransferase subunit B, mitochondrial (484 aa).

It belongs to the GatB/GatE family. GatB subfamily. As to quaternary structure, subunit of the heterotrimeric GatFAB amidotransferase (AdT) complex, composed of A, B and F subunits.

It localises to the mitochondrion. It carries out the reaction L-glutamyl-tRNA(Gln) + L-glutamine + ATP + H2O = L-glutaminyl-tRNA(Gln) + L-glutamate + ADP + phosphate + H(+). Functionally, allows the formation of correctly charged Gln-tRNA(Gln) through the transamidation of misacylated Glu-tRNA(Gln) in the mitochondria. The reaction takes place in the presence of glutamine and ATP through an activated gamma-phospho-Glu-tRNA(Gln). The polypeptide is Glutamyl-tRNA(Gln) amidotransferase subunit B, mitochondrial (Candida tropicalis (strain ATCC MYA-3404 / T1) (Yeast)).